A 340-amino-acid polypeptide reads, in one-letter code: Holliday junction branch migration complex subunit RuvB (340 aa).

The interval 1 to 183 (MKRDDLVSPE…FGISFRLDYY (183 aa)) is large ATPase domain (RuvB-L). ATP is bound by residues L22, R23, G64, K67, T68, T69, 130-132 (EDF), R173, Y183, and R220. Residue T68 participates in Mg(2+) binding. The interval 184–254 (AVEELTKIIN…VAVHALEMLE (71 aa)) is small ATPAse domain (RuvB-S). Positions 257–340 (DRGFDQMDRS…KFEVGQKELF (84 aa)) are head domain (RuvB-H). DNA contacts are provided by K312 and R317.

The protein belongs to the RuvB family. In terms of assembly, homohexamer. Forms an RuvA(8)-RuvB(12)-Holliday junction (HJ) complex. HJ DNA is sandwiched between 2 RuvA tetramers; dsDNA enters through RuvA and exits via RuvB. An RuvB hexamer assembles on each DNA strand where it exits the tetramer. Each RuvB hexamer is contacted by two RuvA subunits (via domain III) on 2 adjacent RuvB subunits; this complex drives branch migration. In the full resolvosome a probable DNA-RuvA(4)-RuvB(12)-RuvC(2) complex forms which resolves the HJ.

The protein localises to the cytoplasm. It catalyses the reaction ATP + H2O = ADP + phosphate + H(+). The RuvA-RuvB-RuvC complex processes Holliday junction (HJ) DNA during genetic recombination and DNA repair, while the RuvA-RuvB complex plays an important role in the rescue of blocked DNA replication forks via replication fork reversal (RFR). RuvA specifically binds to HJ cruciform DNA, conferring on it an open structure. The RuvB hexamer acts as an ATP-dependent pump, pulling dsDNA into and through the RuvAB complex. RuvB forms 2 homohexamers on either side of HJ DNA bound by 1 or 2 RuvA tetramers; 4 subunits per hexamer contact DNA at a time. Coordinated motions by a converter formed by DNA-disengaged RuvB subunits stimulates ATP hydrolysis and nucleotide exchange. Immobilization of the converter enables RuvB to convert the ATP-contained energy into a lever motion, pulling 2 nucleotides of DNA out of the RuvA tetramer per ATP hydrolyzed, thus driving DNA branch migration. The RuvB motors rotate together with the DNA substrate, which together with the progressing nucleotide cycle form the mechanistic basis for DNA recombination by continuous HJ branch migration. Branch migration allows RuvC to scan DNA until it finds its consensus sequence, where it cleaves and resolves cruciform DNA. This Syntrophus aciditrophicus (strain SB) protein is Holliday junction branch migration complex subunit RuvB.